We begin with the raw amino-acid sequence, 805 residues long: Translation initiation factor IF-2 (805 aa).

Disordered stretches follow at residues 68–89 (VVTE…EKKE) and 141–215 (KEKE…KEKK). Residues 79–89 (VEEKKEEEKKE) are compositionally biased toward basic and acidic residues. In terms of domain architecture, tr-type G spans 306–474 (PRPPIVVVMG…MILLLADILE (169 aa)). Residues 315–322 (GHVDHGKT) are G1. 315 to 322 (GHVDHGKT) provides a ligand contact to GTP. Residues 340-344 (GITQH) form a G2 region. The tract at residues 362-365 (DTPG) is G3. Residues 362–366 (DTPGH) and 416–419 (NKID) each bind GTP. Positions 416-419 (NKID) are G4. The tract at residues 452–454 (SAK) is G5.

It belongs to the TRAFAC class translation factor GTPase superfamily. Classic translation factor GTPase family. IF-2 subfamily.

Its subcellular location is the cytoplasm. One of the essential components for the initiation of protein synthesis. Protects formylmethionyl-tRNA from spontaneous hydrolysis and promotes its binding to the 30S ribosomal subunits. Also involved in the hydrolysis of GTP during the formation of the 70S ribosomal complex. In Aquifex aeolicus (strain VF5), this protein is Translation initiation factor IF-2 (infB).